The following is a 428-amino-acid chain: Elongation factor 1-alpha (428 aa).

A tr-type G domain is found at 5-215; that stretch reads KPHINIVFIG…ALDQMPEPPK (211 aa). A G1 region spans residues 14–21; the sequence is GHVDHGKS. GTP is bound at residue 14–21; the sequence is GHVDHGKS. Ser21 contributes to the Mg(2+) binding site. The G2 stretch occupies residues 68-72; that stretch reads GITID. A G3 region spans residues 89-92; the sequence is DAPG. Residues 89–93 and 144–147 each bind GTP; these read DAPGH and NKMD. The segment at 144-147 is G4; it reads NKMD. A G5 region spans residues 181–183; sequence SAW.

Belongs to the TRAFAC class translation factor GTPase superfamily. Classic translation factor GTPase family. EF-Tu/EF-1A subfamily.

The protein resides in the cytoplasm. The enzyme catalyses GTP + H2O = GDP + phosphate + H(+). Its function is as follows. GTP hydrolase that promotes the GTP-dependent binding of aminoacyl-tRNA to the A-site of ribosomes during protein biosynthesis. The polypeptide is Elongation factor 1-alpha (Thermococcus celer).